The sequence spans 1297 residues: Protein Atossa (1297 aa).

Disordered regions lie at residues 1 to 22 and 117 to 149; these read MIPT…GASA and TNPY…THQR. The span at 133–144 shows a compositional bias: low complexity; it reads GSGSTGSPSSSS. The tract at residues 174–182 is transactivation domain 1 (TAD1); the sequence is VSLAINDLN. Disordered stretches follow at residues 206–227, 287–311, 518–655, 704–741, and 1017–1048; these read SSAG…NSSD, TPTT…KHGP, GLPH…ETQS, SNGT…SSAD, and AAHK…DLES. Composition is skewed to low complexity over residues 213–226 and 287–305; these read NNSS…SNSS and TPTT…SSAS. The span at 564–578 shows a compositional bias: polar residues; sequence SALTPTTTAGGSNCD. The segment covering 605 to 620 has biased composition (basic residues); that stretch reads QKYRKRMQRRDKKRER. 2 stretches are compositionally biased toward low complexity: residues 643 to 655 and 706 to 716; these read SQTQ…ETQS and GTANGSTNGAT. Over residues 717–731 the composition is skewed to acidic residues; that stretch reads DDGDDSDTTASEMEE. Residues 1074-1132 form a required for macropage invasion region; the sequence is LLGNLEESLLQRRLMPKIEVMGFTLQLGASGGFCPTQVNIPAVSYFYELHGETLSTPYL. Residues 1150–1158 form a transactivation domain 2 (TAD2) region; the sequence is VQATLLNPI. Positions 1192–1213 are disordered; the sequence is SQDQDEGHKVPRSPTVTSTTSK. Residues 1203–1212 are compositionally biased toward low complexity; that stretch reads RSPTVTSTTS.

It belongs to the ATOS family. As to expression, expressed in macrophages.

The protein localises to the nucleus. Functionally, transcription regulator that synchronizes transcriptional and translational programs to promote macrophage invasion of tissues. Required in macrophages for their early invasion into the extended germband. Induces transcriptional expression of metabolic enzymes as well as of the translational regulator pths/DDX47. With pths/DDX47, adjusts transcription and translation of a subset of OXPHOS genes to increase mitochondrial bioenergetics and allow macrophage tissue invasion. The protein is Protein Atossa of Drosophila melanogaster (Fruit fly).